Reading from the N-terminus, the 564-residue chain is MSYPADDYESEAAYDPYAYPSDYDMHTGDPKQDLAYERQYEQQTYQVIPEVIKNFIQYFHKTVSDLIDQKVYELQASRVSSDVIDQKVYEIQDIYENSWTKLTERFFKNTPWPEAEAIAPQVGNDAVFLILYKELYYRHIYAKVSGGPSLEQRFESYYNYCNLFNYILNADGPAPLELPNQWLWDIIDEFIYQFQSFSQYRCKTAKKSEEEIDFLRSNPKIWNVHSVLNVLHSLVDKSNINRQLEVYTSGGDPESVAGEYGRHSLYKMLGYFSLVGLLRLHSLLGDYYQAIKVLENIELNKKSMYSRVPECQVTTYYYVGFAYLMMRRYQDAIRVFANILLYIQRTKSMFQRTTYKYEMINKQNEQMHALLAIALTMYPMRIDESIHLQLREKYGDKMLRMQKGDPQVYEELFSYSCPKFLSPVVPNYDNVHPNYHKEPFLQQLKVFSDEVQQQAQLSTIRSFLKLYTTMPVAKLAGFLDLTEQEFRIQLLVFKHKMKNLVWTSGISALDGEFQSASEVDFYIDKDMIHIADTKVARRYGDFFIRQIHKFEELNRTLKKMGQRP.

Ser-2 bears the N-acetylserine mark. Ser-21 is modified (phosphoserine). The PCI domain maps to 331 to 537 (DAIRVFANIL…IHIADTKVAR (207 aa)). Lys-465 and Lys-549 each carry N6-acetyllysine.

Component of the eukaryotic translation initiation factor 3 (eIF-3) complex, which is composed of 13 subunits: EIF3A, EIF3B, EIF3C, EIF3D, EIF3E, EIF3F, EIF3G, EIF3H, EIF3I, EIF3J, EIF3K, EIF3L and EIF3M. The eIF-3 complex appears to include 3 stable modules: module A is composed of EIF3A, EIF3B, EIF3G and EIF3I; module B is composed of EIF3F, EIF3H, and EIF3M; and module C is composed of EIF3C, EIF3D, EIF3E, EIF3K and EIF3L. EIF3C of module C binds EIF3B of module A and EIF3H of module B, thereby linking the three modules. EIF3J is a labile subunit that binds to the eIF-3 complex via EIF3B. The eIF-3 complex interacts with RPS6KB1 under conditions of nutrient depletion. Mitogenic stimulation leads to binding and activation of a complex composed of MTOR and RPTOR, leading to phosphorylation and release of RPS6KB1 and binding of EIF4B to eIF-3. Interacts with RRN3.

It localises to the cytoplasm. Component of the eukaryotic translation initiation factor 3 (eIF-3) complex, which is required for several steps in the initiation of protein synthesis. The eIF-3 complex associates with the 40S ribosome and facilitates the recruitment of eIF-1, eIF-1A, eIF-2:GTP:methionyl-tRNAi and eIF-5 to form the 43S pre-initiation complex (43S PIC). The eIF-3 complex stimulates mRNA recruitment to the 43S PIC and scanning of the mRNA for AUG recognition. The eIF-3 complex is also required for disassembly and recycling of post-termination ribosomal complexes and subsequently prevents premature joining of the 40S and 60S ribosomal subunits prior to initiation. The eIF-3 complex specifically targets and initiates translation of a subset of mRNAs involved in cell proliferation, including cell cycling, differentiation and apoptosis, and uses different modes of RNA stem-loop binding to exert either translational activation or repression. Functionally, (Microbial infection) In case of FCV infection, plays a role in the ribosomal termination-reinitiation event leading to the translation of VP2. The chain is Eukaryotic translation initiation factor 3 subunit L from Homo sapiens (Human).